A 670-amino-acid polypeptide reads, in one-letter code: ATP synthase subunit alpha 2 (670 aa).

180–187 (GDRATGKT) contributes to the ATP binding site. Residues 527-670 (AEDAAGDIGG…DAEAEARHKR (144 aa)) form a disordered region. Residues 543-588 (ARGDADRDADHGANREVSREVSPEASREVSREVSREVSHEADRDAA) are compositionally biased toward basic and acidic residues. The segment covering 589 to 599 (ADAARVAGRAP) has biased composition (low complexity). A compositionally biased stretch (basic and acidic residues) spans 621–639 (ADGDRASASRPRPDARGDA). The span at 640 to 661 (ARTAPSPQGGAEVNVNAAANVD) shows a compositional bias: low complexity.

Belongs to the ATPase alpha/beta chains family. In terms of assembly, F-type ATPases have 2 components, CF(1) - the catalytic core - and CF(0) - the membrane proton channel. CF(1) has five subunits: alpha(3), beta(3), gamma(1), delta(1), epsilon(1). CF(0) has three main subunits: a(1), b(2) and c(9-12). The alpha and beta chains form an alternating ring which encloses part of the gamma chain. CF(1) is attached to CF(0) by a central stalk formed by the gamma and epsilon chains, while a peripheral stalk is formed by the delta and b chains.

The protein localises to the cell inner membrane. It carries out the reaction ATP + H2O + 4 H(+)(in) = ADP + phosphate + 5 H(+)(out). In terms of biological role, produces ATP from ADP in the presence of a proton gradient across the membrane. The alpha chain is a regulatory subunit. This chain is ATP synthase subunit alpha 2, found in Burkholderia pseudomallei (strain 668).